The chain runs to 268 residues: Interleukin-1 beta (268 aa).

Residues 1 to 115 (MAAVPDTSDM…DNWDEGYVCD (115 aa)) constitute a propeptide that is removed on maturation.

Belongs to the IL-1 family. In terms of assembly, monomer. In its precursor form, weakly interacts with full-length MEFV; the mature cytokine does not interact at all. Interacts with integrins ITGAV:ITGBV and ITGA5:ITGB1; integrin-binding is required for IL1B signaling. Interacts with cargo receptor TMED10; the interaction is direct and is required for the secretion of IL1B mature form. Interacts with HSP90AB1; the interaction facilitates cargo translocation into the ERGIC. Interacts with HSP90B1; the interaction facilitates cargo translocation into the ERGIC.

It localises to the cytoplasm. It is found in the cytosol. The protein localises to the secreted. The protein resides in the lysosome. Its subcellular location is the extracellular exosome. Its function is as follows. Potent pro-inflammatory cytokine. Initially discovered as the major endogenous pyrogen, induces prostaglandin synthesis, neutrophil influx and activation, T-cell activation and cytokine production, B-cell activation and antibody production, and fibroblast proliferation and collagen production. Promotes Th17 differentiation of T-cells. Synergizes with IL12/interleukin-12 to induce IFNG synthesis from T-helper 1 (Th1) cells. Plays a role in angiogenesis by inducing VEGF production synergistically with TNF and IL6. Involved in transduction of inflammation downstream of pyroptosis: its mature form is specifically released in the extracellular milieu by passing through the gasdermin-D (GSDMD) pore. In Equus caballus (Horse), this protein is Interleukin-1 beta (IL1B).